Here is a 649-residue protein sequence, read N- to C-terminus: Protein mitoshell (649 aa).

Residues 167 to 176 are compositionally biased toward basic and acidic residues; the sequence is LRSEARKPRP. Disordered stretches follow at residues 167–193, 389–414, and 485–512; these read LRSEARKPRPESVVPEESSISSLESGA, HGPSAFSTPNNQIRNNAASKGQEPTS, and ALPSQEIPNAPTPKSSPQSDRPRDVRSY. The segment covering 177–191 has biased composition (low complexity); sequence ESVVPEESSISSLES. Composition is skewed to polar residues over residues 393 to 414 and 485 to 503; these read AFSTPNNQIRNNAASKGQEPTS and ALPSQEIPNAPTPKSSPQS.

Its function is as follows. Required for male meiotic cytokinesis through its involvement in the regulation of mitochondrial aggregation and fusion, astral spindle assembly and contractile ring formation. This chain is Protein mitoshell, found in Drosophila melanogaster (Fruit fly).